Reading from the N-terminus, the 672-residue chain is DNA ligase (672 aa).

NAD(+) is bound by residues 34–38 (DSVYD), 83–84 (SL), and glutamate 113. The active-site N6-AMP-lysine intermediate is the lysine 115. Residues arginine 136, glutamate 170, lysine 286, and lysine 310 each contribute to the NAD(+) site. Zn(2+) contacts are provided by cysteine 404, cysteine 407, cysteine 422, and cysteine 427. Positions 592 to 672 (STDSSFNGLR…EFIQQMEEES (81 aa)) constitute a BRCT domain.

Belongs to the NAD-dependent DNA ligase family. LigA subfamily. It depends on Mg(2+) as a cofactor. Mn(2+) serves as cofactor.

The catalysed reaction is NAD(+) + (deoxyribonucleotide)n-3'-hydroxyl + 5'-phospho-(deoxyribonucleotide)m = (deoxyribonucleotide)n+m + AMP + beta-nicotinamide D-nucleotide.. DNA ligase that catalyzes the formation of phosphodiester linkages between 5'-phosphoryl and 3'-hydroxyl groups in double-stranded DNA using NAD as a coenzyme and as the energy source for the reaction. It is essential for DNA replication and repair of damaged DNA. This Ligilactobacillus salivarius (strain UCC118) (Lactobacillus salivarius) protein is DNA ligase.